The chain runs to 471 residues: Glutamate--tRNA ligase (471 aa).

The short motif at 9 to 19 is the 'HIGH' region element; it reads PSPTGYLHVGG. Residues Cys98, Cys100, Cys125, and Asp127 each coordinate Zn(2+). Residues 237–241 carry the 'KMSKS' region motif; it reads KLSKR. Lys240 contributes to the ATP binding site.

Belongs to the class-I aminoacyl-tRNA synthetase family. Glutamate--tRNA ligase type 1 subfamily. As to quaternary structure, monomer. Zn(2+) serves as cofactor.

Its subcellular location is the cytoplasm. The enzyme catalyses tRNA(Glu) + L-glutamate + ATP = L-glutamyl-tRNA(Glu) + AMP + diphosphate. Functionally, catalyzes the attachment of glutamate to tRNA(Glu) in a two-step reaction: glutamate is first activated by ATP to form Glu-AMP and then transferred to the acceptor end of tRNA(Glu). The sequence is that of Glutamate--tRNA ligase from Yersinia enterocolitica serotype O:8 / biotype 1B (strain NCTC 13174 / 8081).